A 183-amino-acid polypeptide reads, in one-letter code: Oligoribonuclease (183 aa).

An Exonuclease domain is found at 9–172 (LIWIDLEMTG…DDIRDSISEL (164 aa)). Y130 is a catalytic residue.

The protein belongs to the oligoribonuclease family.

It is found in the cytoplasm. In terms of biological role, 3'-to-5' exoribonuclease specific for small oligoribonucleotides. The sequence is that of Oligoribonuclease from Acinetobacter baylyi (strain ATCC 33305 / BD413 / ADP1).